Here is a 254-residue protein sequence, read N- to C-terminus: Triosephosphate isomerase (254 aa).

Residue 9–11 (NWK) coordinates substrate. His96 serves as the catalytic Electrophile. Glu169 (proton acceptor) is an active-site residue. Substrate-binding positions include Gly175, Ser215, and 236-237 (GG).

Belongs to the triosephosphate isomerase family. As to quaternary structure, homodimer.

It is found in the cytoplasm. The catalysed reaction is D-glyceraldehyde 3-phosphate = dihydroxyacetone phosphate. Its pathway is carbohydrate biosynthesis; gluconeogenesis. It participates in carbohydrate degradation; glycolysis; D-glyceraldehyde 3-phosphate from glycerone phosphate: step 1/1. Its function is as follows. Involved in the gluconeogenesis. Catalyzes stereospecifically the conversion of dihydroxyacetone phosphate (DHAP) to D-glyceraldehyde-3-phosphate (G3P). In Borrelia recurrentis (strain A1), this protein is Triosephosphate isomerase.